The sequence spans 365 residues: tRNA-specific 2-thiouridylase MnmA (365 aa).

Residues 14–21 and Leu40 contribute to the ATP site; that span reads AMSGGVDS. The Nucleophile role is filled by Cys108. Residues Cys108 and Cys204 are joined by a disulfide bond. Gly132 provides a ligand contact to ATP. The interaction with tRNA stretch occupies residues 154–156; that stretch reads KDQ. Catalysis depends on Cys204, which acts as the Cysteine persulfide intermediate.

It belongs to the MnmA/TRMU family.

The protein localises to the cytoplasm. It carries out the reaction S-sulfanyl-L-cysteinyl-[protein] + uridine(34) in tRNA + AH2 + ATP = 2-thiouridine(34) in tRNA + L-cysteinyl-[protein] + A + AMP + diphosphate + H(+). Its function is as follows. Catalyzes the 2-thiolation of uridine at the wobble position (U34) of tRNA, leading to the formation of s(2)U34. The polypeptide is tRNA-specific 2-thiouridylase MnmA (Rickettsia africae (strain ESF-5)).